A 165-amino-acid polypeptide reads, in one-letter code: MPPKFDPNEIKVVYLRCTGGEVGATSALAPKIGPLGLSPKKVGDDIAKATGDWKGLRITVKLTIQNRQAQIEVVPSASALIIKALKEPPRDRKKQKNIKHNGNITFDEIVNIARQMRHRSLARELSGTIKEILGTAQSVGCNVDGRHPHDIIDDINSGAVECPAS.

Phosphoserine is present on Ser-38. Lys-40 participates in a covalent cross-link: Glycyl lysine isopeptide (Lys-Gly) (interchain with G-Cter in SUMO2). Residue Lys-48 forms a Glycyl lysine isopeptide (Lys-Gly) (interchain with G-Cter in ubiquitin) linkage. Lys-54 is subject to N6-acetyllysine. Lys-83 participates in a covalent cross-link: Glycyl lysine isopeptide (Lys-Gly) (interchain with G-Cter in ubiquitin). At Ser-165 the chain carries Phosphoserine.

This sequence belongs to the universal ribosomal protein uL11 family. As to quaternary structure, component of the large ribosomal subunit. Mature ribosomes consist of a small (40S) and a large (60S) subunit. The 40S subunit contains about 33 different proteins and 1 molecule of RNA (18S). The 60S subunit contains about 49 different proteins and 3 molecules of RNA (28S, 5.8S and 5S). In terms of processing, ubiquitinated at Lys-48 and Lys-83 by RNF14 and RNF25 in response to ribosome collisions (ribosome stalling).

It is found in the cytoplasm. Functionally, component of the large ribosomal subunit. The ribosome is a large ribonucleoprotein complex responsible for the synthesis of proteins in the cell. Binds directly to 26S ribosomal RNA. The sequence is that of Large ribosomal subunit protein uL11 (Rpl12) from Rattus norvegicus (Rat).